Consider the following 270-residue polypeptide: Hemin import ATP-binding protein HmuV (270 aa).

An ABC transporter domain is found at 2–238; the sequence is LTVENIEVTL…VTLSQAYGCT (237 aa). 34–41 lines the ATP pocket; sequence GHNGSGKT.

The protein belongs to the ABC transporter superfamily. Heme (hemin) importer (TC 3.A.1.14.5) family. As to quaternary structure, the complex is composed of two ATP-binding proteins (HmuV), two transmembrane proteins (HmuU) and a solute-binding protein (HmuT).

The protein resides in the cell inner membrane. Part of the ABC transporter complex HmuTUV involved in hemin import. Responsible for energy coupling to the transport system. The sequence is that of Hemin import ATP-binding protein HmuV from Jannaschia sp. (strain CCS1).